The primary structure comprises 545 residues: Bifunctional purine biosynthesis protein PurH (545 aa).

Residues 1–150 (MTNTNRPIRR…KNHATVAIVT (150 aa)) enclose the MGS-like domain.

Belongs to the PurH family.

It catalyses the reaction (6R)-10-formyltetrahydrofolate + 5-amino-1-(5-phospho-beta-D-ribosyl)imidazole-4-carboxamide = 5-formamido-1-(5-phospho-D-ribosyl)imidazole-4-carboxamide + (6S)-5,6,7,8-tetrahydrofolate. The catalysed reaction is IMP + H2O = 5-formamido-1-(5-phospho-D-ribosyl)imidazole-4-carboxamide. The protein operates within purine metabolism; IMP biosynthesis via de novo pathway; 5-formamido-1-(5-phospho-D-ribosyl)imidazole-4-carboxamide from 5-amino-1-(5-phospho-D-ribosyl)imidazole-4-carboxamide (10-formyl THF route): step 1/1. It functions in the pathway purine metabolism; IMP biosynthesis via de novo pathway; IMP from 5-formamido-1-(5-phospho-D-ribosyl)imidazole-4-carboxamide: step 1/1. The sequence is that of Bifunctional purine biosynthesis protein PurH from Bifidobacterium longum (strain DJO10A).